Reading from the N-terminus, the 332-residue chain is GTP 3',8-cyclase (332 aa).

The region spanning 9–220 (RFARKVDYLR…DQVRERIAER (212 aa)) is the Radical SAM core domain. Arg-18 is a GTP binding site. [4Fe-4S] cluster is bound by residues Cys-25 and Cys-29. Position 31 (Tyr-31) interacts with S-adenosyl-L-methionine. [4Fe-4S] cluster is bound at residue Cys-32. Arg-67 is a binding site for GTP. Gly-71 lines the S-adenosyl-L-methionine pocket. Position 98 (Thr-98) interacts with GTP. An S-adenosyl-L-methionine-binding site is contributed by Ser-122. Residue Lys-159 coordinates GTP. Met-193 contributes to the S-adenosyl-L-methionine binding site. 2 residues coordinate [4Fe-4S] cluster: Cys-258 and Cys-261. 263-265 (RVR) contacts GTP. Position 275 (Cys-275) interacts with [4Fe-4S] cluster.

The protein belongs to the radical SAM superfamily. MoaA family. In terms of assembly, monomer and homodimer. [4Fe-4S] cluster serves as cofactor.

The catalysed reaction is GTP + AH2 + S-adenosyl-L-methionine = (8S)-3',8-cyclo-7,8-dihydroguanosine 5'-triphosphate + 5'-deoxyadenosine + L-methionine + A + H(+). It functions in the pathway cofactor biosynthesis; molybdopterin biosynthesis. Functionally, catalyzes the cyclization of GTP to (8S)-3',8-cyclo-7,8-dihydroguanosine 5'-triphosphate. The polypeptide is GTP 3',8-cyclase (Pseudomonas syringae pv. syringae (strain B728a)).